We begin with the raw amino-acid sequence, 361 residues long: Holliday junction branch migration complex subunit RuvB (361 aa).

Residues 1–181 are large ATPase domain (RuvB-L); sequence MKDQRLLDSV…FGIPIRLNFY (181 aa). ATP is bound by residues leucine 20, arginine 21, glycine 62, lysine 65, threonine 66, threonine 67, 128-130, arginine 171, tyrosine 181, and arginine 218; that span reads EDY. Threonine 66 lines the Mg(2+) pocket. Residues 182 to 252 are small ATPAse domain (RuvB-S); the sequence is TIEELEYIVQ…VADEALSRLE (71 aa). Residues 255–361 are head domain (RuvB-H); it reads HLGLDPLDRR…QTTLWDEADE (107 aa). Arginine 291, arginine 310, and arginine 315 together coordinate DNA.

Belongs to the RuvB family. Homohexamer. Forms an RuvA(8)-RuvB(12)-Holliday junction (HJ) complex. HJ DNA is sandwiched between 2 RuvA tetramers; dsDNA enters through RuvA and exits via RuvB. An RuvB hexamer assembles on each DNA strand where it exits the tetramer. Each RuvB hexamer is contacted by two RuvA subunits (via domain III) on 2 adjacent RuvB subunits; this complex drives branch migration. In the full resolvosome a probable DNA-RuvA(4)-RuvB(12)-RuvC(2) complex forms which resolves the HJ.

It localises to the cytoplasm. It catalyses the reaction ATP + H2O = ADP + phosphate + H(+). Its function is as follows. The RuvA-RuvB-RuvC complex processes Holliday junction (HJ) DNA during genetic recombination and DNA repair, while the RuvA-RuvB complex plays an important role in the rescue of blocked DNA replication forks via replication fork reversal (RFR). RuvA specifically binds to HJ cruciform DNA, conferring on it an open structure. The RuvB hexamer acts as an ATP-dependent pump, pulling dsDNA into and through the RuvAB complex. RuvB forms 2 homohexamers on either side of HJ DNA bound by 1 or 2 RuvA tetramers; 4 subunits per hexamer contact DNA at a time. Coordinated motions by a converter formed by DNA-disengaged RuvB subunits stimulates ATP hydrolysis and nucleotide exchange. Immobilization of the converter enables RuvB to convert the ATP-contained energy into a lever motion, pulling 2 nucleotides of DNA out of the RuvA tetramer per ATP hydrolyzed, thus driving DNA branch migration. The RuvB motors rotate together with the DNA substrate, which together with the progressing nucleotide cycle form the mechanistic basis for DNA recombination by continuous HJ branch migration. Branch migration allows RuvC to scan DNA until it finds its consensus sequence, where it cleaves and resolves cruciform DNA. In Bartonella quintana (strain Toulouse) (Rochalimaea quintana), this protein is Holliday junction branch migration complex subunit RuvB.